We begin with the raw amino-acid sequence, 320 residues long: Beta-carotene 4-ketolase 3 (320 aa).

It catalyses the reaction echinenone + 2 AH2 + 2 O2 = canthaxanthin + 2 A + 3 H2O. The enzyme catalyses all-trans-beta-carotene + 2 AH2 + 2 O2 = echinenone + 2 A + 3 H2O. The protein operates within carotenoid biosynthesis. Its function is as follows. Involved in the biosynthesis of ketocarotenoids which are powerful anti-oxidative molecules. Catalyzes the conversion of beta-carotene to canthaxanthin via echinenone. This chain is Beta-carotene 4-ketolase 3, found in Haematococcus lacustris (Green alga).